The sequence spans 80 residues: uncharacterized protein (80 aa).

This is an uncharacterized protein from Bacillus subtilis (strain 168).